The primary structure comprises 951 residues: Valine--tRNA ligase (951 aa).

A 'HIGH' region motif is present at residues 42 to 52; the sequence is PNVTGSLHMGH. Positions 554–558 match the 'KMSKS' region motif; it reads KMSKS. ATP is bound at residue lysine 557. Positions 880 to 944 form a coiled coil; sequence AGLINKEDEL…AEAKAKLIEQ (65 aa).

Belongs to the class-I aminoacyl-tRNA synthetase family. ValS type 1 subfamily. Monomer.

It is found in the cytoplasm. The catalysed reaction is tRNA(Val) + L-valine + ATP = L-valyl-tRNA(Val) + AMP + diphosphate. Catalyzes the attachment of valine to tRNA(Val). As ValRS can inadvertently accommodate and process structurally similar amino acids such as threonine, to avoid such errors, it has a 'posttransfer' editing activity that hydrolyzes mischarged Thr-tRNA(Val) in a tRNA-dependent manner. In Shigella boydii serotype 4 (strain Sb227), this protein is Valine--tRNA ligase.